A 249-amino-acid chain; its full sequence is Aliphatic sulfonates import ATP-binding protein SsuB 2 (249 aa).

Residues 15 to 231 (VHVRDLARRF…DHGDPRFAQF (217 aa)) enclose the ABC transporter domain. 47 to 54 (GRSGSGKS) contacts ATP.

It belongs to the ABC transporter superfamily. Aliphatic sulfonates importer (TC 3.A.1.17.2) family. As to quaternary structure, the complex is composed of two ATP-binding proteins (SsuB), two transmembrane proteins (SsuC) and a solute-binding protein (SsuA).

The protein resides in the cell inner membrane. It carries out the reaction ATP + H2O + aliphatic sulfonate-[sulfonate-binding protein]Side 1 = ADP + phosphate + aliphatic sulfonateSide 2 + [sulfonate-binding protein]Side 1.. In terms of biological role, part of the ABC transporter complex SsuABC involved in aliphatic sulfonates import. Responsible for energy coupling to the transport system. This is Aliphatic sulfonates import ATP-binding protein SsuB 2 from Rhizobium johnstonii (strain DSM 114642 / LMG 32736 / 3841) (Rhizobium leguminosarum bv. viciae).